Here is a 177-residue protein sequence, read N- to C-terminus: Dual-action ribosomal maturation protein DarP (177 aa).

The interval 1–26 (MKIVGDSEHFKQPYDSDEEYVSKTED) is disordered.

It belongs to the DarP family.

It is found in the cytoplasm. Functionally, member of a network of 50S ribosomal subunit biogenesis factors which assembles along the 30S-50S interface, preventing incorrect 23S rRNA structures from forming. Promotes peptidyl transferase center (PTC) maturation. This Shewanella sp. (strain ANA-3) protein is Dual-action ribosomal maturation protein DarP.